The primary structure comprises 389 residues: 23S rRNA (uracil(747)-C(5))-methyltransferase RlmC (389 aa).

[4Fe-4S] cluster-binding residues include C12, C20, C23, and C99. Residues Q224, F253, E274, and N321 each coordinate S-adenosyl-L-methionine. The active-site Nucleophile is C348.

This sequence belongs to the class I-like SAM-binding methyltransferase superfamily. RNA M5U methyltransferase family. RlmC subfamily.

The catalysed reaction is uridine(747) in 23S rRNA + S-adenosyl-L-methionine = 5-methyluridine(747) in 23S rRNA + S-adenosyl-L-homocysteine + H(+). In terms of biological role, catalyzes the formation of 5-methyl-uridine at position 747 (m5U747) in 23S rRNA. The polypeptide is 23S rRNA (uracil(747)-C(5))-methyltransferase RlmC (Shewanella sp. (strain W3-18-1)).